The chain runs to 283 residues: uncharacterized protein (283 aa).

N-linked (GlcNAc...) asparagine glycosylation is present at N15. Residues 15–81 enclose the PQ-loop 1 domain; it reads NATASTVFAI…QELNIALKVQ (67 aa). Transmembrane regions (helical) follow at residues 19-39, 48-68, 108-128, 138-158, 170-190, and 206-226; these read STVFAILGTVCWCVQLIPQII, EGLDTLFILSWVVASIPLSVY, ALFVVISFMLFSGGLQAMLIL, VEWPVVFMGVLATVLVNIGFL, VTGISYLFLAIDSSGSLFSFL, and GLLFIIEMGVFVLAFIFNVLL. The PQ-loop 2 domain maps to 149 to 204; the sequence is ATVLVNIGFLPQYISIFRARAVTGISYLFLAIDSSGSLFSFLSLPFDRWDVLAAVD. N228 is a glycosylation site (N-linked (GlcNAc...) asparagine).

It is found in the membrane. This is an uncharacterized protein from Schizosaccharomyces pombe (strain 972 / ATCC 24843) (Fission yeast).